Reading from the N-terminus, the 464-residue chain is C-terminal processing peptidase, chloroplastic (464 aa).

Residues 1–32 (MHSRTNCLQTSVRAPQPHFRPFTAVKTCRQRC) constitute a chloroplast transit peptide. The transit peptide at 33 to 77 (STTAAAAKRDQAQEQQPWIQVGLGLAAAATAVAVGLGAAALPAQA) directs the protein to the thylakoid. One can recognise a PDZ domain in the interval 149 to 234 (LAALRRGTAG…SQVEVVLHAP (86 aa)). Residues serine 372 and lysine 397 each act as charge relay system in the active site.

It belongs to the peptidase S41A family. As to quaternary structure, monomer.

It localises to the plastid. It is found in the chloroplast thylakoid lumen. It catalyses the reaction The enzyme shows specific recognition of a C-terminal tripeptide, Xaa-Yaa-Zaa, in which Xaa is preferably Ala or Leu, Yaa is preferably Ala or Tyr, and Zaa is preferably Ala, but then cleaves at a variable distance from the C-terminus. A typical cleavage is -Ala-Ala-|-Arg-Ala-Ala-Lys-Glu-Asn-Tyr-Ala-Leu-Ala-Ala.. With respect to regulation, not inhibited by antipain, 4-amidinophenylmethanesulfonyl fluoride, aprotinin, chymostatin, 3,4-dichloroisocoumarin, diisopropyl fluorophosphate, E64, EDTA, EGTA, iodoacetamide, leupeptin, pepstatin, o-phenanthroline, N-ethylmaleimide, phosphoramidon or phenylmethylsulfonyl fluoride. In terms of biological role, protease involved in the C-terminal processing of the chloroplastic D1 protein of photosystem II. This proteolytic processing is necessary to allow the light-driven assembly of the tetranuclear manganese cluster, which is responsible for photosynthetic water oxidation. The sequence is that of C-terminal processing peptidase, chloroplastic (ctpA) from Tetradesmus obliquus (Green alga).